The primary structure comprises 135 residues: ATP synthase epsilon chain (135 aa).

A compositionally biased stretch (basic and acidic residues) spans 90–103 (DVRRAESAKERAES). A disordered region spans residues 90-115 (DVRRAESAKERAESHLNNNDEDTDIN).

This sequence belongs to the ATPase epsilon chain family. In terms of assembly, F-type ATPases have 2 components, CF(1) - the catalytic core - and CF(0) - the membrane proton channel. CF(1) has five subunits: alpha(3), beta(3), gamma(1), delta(1), epsilon(1). CF(0) has three main subunits: a, b and c.

It localises to the cell membrane. Functionally, produces ATP from ADP in the presence of a proton gradient across the membrane. This chain is ATP synthase epsilon chain, found in Staphylococcus carnosus (strain TM300).